Consider the following 65-residue polypeptide: Putative beta-neurotoxin RjAa7 (65 aa).

Residues 1–64 (KEGYPVGRDG…VWDSSTNKCG (64 aa)) enclose the LCN-type CS-alpha/beta domain. Intrachain disulfides connect Cys11/Cys63, Cys15/Cys37, Cys22/Cys44, and Cys26/Cys46.

Belongs to the long (4 C-C) scorpion toxin superfamily. Sodium channel inhibitor family. Beta subfamily. Expressed by the venom gland.

The protein localises to the secreted. Beta toxins bind voltage-independently at site-4 of sodium channels (Nav) and shift the voltage of activation toward more negative potentials thereby affecting sodium channel activation and promoting spontaneous and repetitive firing. This Rhopalurus junceus (Caribbean blue scorpion) protein is Putative beta-neurotoxin RjAa7.